We begin with the raw amino-acid sequence, 109 residues long: Large ribosomal subunit protein uL22 (109 aa).

It belongs to the universal ribosomal protein uL22 family. Part of the 50S ribosomal subunit.

Its function is as follows. This protein binds specifically to 23S rRNA; its binding is stimulated by other ribosomal proteins, e.g. L4, L17, and L20. It is important during the early stages of 50S assembly. It makes multiple contacts with different domains of the 23S rRNA in the assembled 50S subunit and ribosome. Functionally, the globular domain of the protein is located near the polypeptide exit tunnel on the outside of the subunit, while an extended beta-hairpin is found that lines the wall of the exit tunnel in the center of the 70S ribosome. The chain is Large ribosomal subunit protein uL22 from Azoarcus sp. (strain BH72).